We begin with the raw amino-acid sequence, 252 residues long: Imidazole glycerol phosphate synthase subunit HisF (252 aa).

Residues aspartate 11 and aspartate 130 contribute to the active site.

The protein belongs to the HisA/HisF family. As to quaternary structure, heterodimer of HisH and HisF.

It is found in the cytoplasm. It catalyses the reaction 5-[(5-phospho-1-deoxy-D-ribulos-1-ylimino)methylamino]-1-(5-phospho-beta-D-ribosyl)imidazole-4-carboxamide + L-glutamine = D-erythro-1-(imidazol-4-yl)glycerol 3-phosphate + 5-amino-1-(5-phospho-beta-D-ribosyl)imidazole-4-carboxamide + L-glutamate + H(+). It participates in amino-acid biosynthesis; L-histidine biosynthesis; L-histidine from 5-phospho-alpha-D-ribose 1-diphosphate: step 5/9. In terms of biological role, IGPS catalyzes the conversion of PRFAR and glutamine to IGP, AICAR and glutamate. The HisF subunit catalyzes the cyclization activity that produces IGP and AICAR from PRFAR using the ammonia provided by the HisH subunit. The protein is Imidazole glycerol phosphate synthase subunit HisF of Bacillus cereus (strain ZK / E33L).